Consider the following 110-residue polypeptide: MAHSAPLGLLEQGCPIQVEHDRKRRQFTVRLNGCHDRAVLLYEYVGKRIVDLQHTEVPDAYRGRGIAKHLAKAALDFVVEEDLKAHLTCWYIQKYVKENPLPQYLEHLQP.

Residues E19–Q109 enclose the N-acetyltransferase domain.

The protein belongs to the NATD1 family.

This Gallus gallus (Chicken) protein is Protein NATD1 (NATD1).